Reading from the N-terminus, the 226-residue chain is 7-cyano-7-deazaguanine synthase (226 aa).

9–19 (LSGGLDSATVL) lines the ATP pocket. Residues cysteine 189, cysteine 199, cysteine 202, and cysteine 205 each coordinate Zn(2+).

Belongs to the QueC family. Zn(2+) is required as a cofactor.

It carries out the reaction 7-carboxy-7-deazaguanine + NH4(+) + ATP = 7-cyano-7-deazaguanine + ADP + phosphate + H2O + H(+). It participates in purine metabolism; 7-cyano-7-deazaguanine biosynthesis. Its function is as follows. Catalyzes the ATP-dependent conversion of 7-carboxy-7-deazaguanine (CDG) to 7-cyano-7-deazaguanine (preQ(0)). The protein is 7-cyano-7-deazaguanine synthase of Cupriavidus pinatubonensis (strain JMP 134 / LMG 1197) (Cupriavidus necator (strain JMP 134)).